A 450-amino-acid polypeptide reads, in one-letter code: MKVIDQFKNKKVLVLGLAKSGESAARLLDKLGAIVTVNDGKPFEDNPAAQSLLEEGIKVITGGHPLELLDEEFALMVKNPGIPYNNPMIEKALAKGIPVLTEVELAYLISEAPIIGITGSNGKTTTTTMIGEVLTAAGQHGLLSGNIGYPASQVAQIASDKDTLVMELSSFQLMGVQEFHPEIAVITNLMPTHIDYHGSFSEYVAAKWNIQNKMTAADFLVLNFNQDLAKDLTSKTEATVVPFSTLEKVDGAYLEDGQLYFRGEVVMAANEIGVPGSHNVENALATIAVAKLRDVDNQTIKETLSAFGGVKHRLQFVDDIKGVKFYNDSKSTNILATQKALSGFDNSKVVLIAGGLDRGNEFDELVPDITGLKKMVILGQSAERVKRAADKAGVAYVEATDIADATRKAYELATQGDVVLLSPANASWDMYANFEVRGDLFIDTVAELKE.

Residue 119–125 (GSNGKTT) coordinates ATP.

The protein belongs to the MurCDEF family.

The protein localises to the cytoplasm. It carries out the reaction UDP-N-acetyl-alpha-D-muramoyl-L-alanine + D-glutamate + ATP = UDP-N-acetyl-alpha-D-muramoyl-L-alanyl-D-glutamate + ADP + phosphate + H(+). The protein operates within cell wall biogenesis; peptidoglycan biosynthesis. Functionally, cell wall formation. Catalyzes the addition of glutamate to the nucleotide precursor UDP-N-acetylmuramoyl-L-alanine (UMA). This chain is UDP-N-acetylmuramoylalanine--D-glutamate ligase, found in Streptococcus pneumoniae serotype 4 (strain ATCC BAA-334 / TIGR4).